We begin with the raw amino-acid sequence, 350 residues long: MATMVAQKLSHLLPSLRQVHPEPQPSVHPEPVFTVDRAEVPPLFWKPYIYVGYRPLHQTWRFYFRTLFQQHNEAVNVWTHLLAALVLLLRLAIFVGTVDFWGDPHALPLFIIVLASFTYLSLSALAHLLQAKSEFWHYSFFFLDYVGVAVYQFGSALAHFYYAIEPAWHAQVQTIFLPMAAFLAWLSCTGSCYNKYIQKPGLLGRTCQEVPSALAYALDISPVAHRILASPEPATDDPALLYHKCQVVFFLLAAAFFSAFMPERWFPGSCHIFGQGHQLFHVFLVLCTLAQLEAVALDYEARRPIYEPLHTRWPHNFSGLFLLTVGSSILTAFLLSQLVRRKLDLDRKTQ.

The Cytoplasmic segment spans residues 1–80; that stretch reads MATMVAQKLS…HNEAVNVWTH (80 aa). A helical transmembrane segment spans residues 81 to 101; the sequence is LLAALVLLLRLAIFVGTVDFW. Topologically, residues 102–105 are extracellular; it reads GDPH. The helical transmembrane segment at 106–126 threads the bilayer; that stretch reads ALPLFIIVLASFTYLSLSALA. Over 127–139 the chain is Cytoplasmic; the sequence is HLLQAKSEFWHYS. A helical membrane pass occupies residues 140-160; it reads FFFLDYVGVAVYQFGSALAHF. Topologically, residues 161-165 are extracellular; it reads YYAIE. A helical transmembrane segment spans residues 166-186; it reads PAWHAQVQTIFLPMAAFLAWL. Residues 187–239 lie on the Cytoplasmic side of the membrane; it reads SCTGSCYNKYIQKPGLLGRTCQEVPSALAYALDISPVAHRILASPEPATDDPA. The helical transmembrane segment at 240 to 260 threads the bilayer; that stretch reads LLYHKCQVVFFLLAAAFFSAF. Residues 261 to 278 lie on the Extracellular side of the membrane; it reads MPERWFPGSCHIFGQGHQ. Residues 279-299 form a helical membrane-spanning segment; sequence LFHVFLVLCTLAQLEAVALDY. At 300-318 the chain is on the cytoplasmic side; the sequence is EARRPIYEPLHTRWPHNFS. Residues 319–339 form a helical membrane-spanning segment; that stretch reads GLFLLTVGSSILTAFLLSQLV. The Extracellular segment spans residues 340-350; sequence RRKLDLDRKTQ.

This sequence belongs to the ADIPOR family.

The protein localises to the cell membrane. In terms of biological role, plasma membrane progesterone (P4) receptor coupled to G proteins. Seems to act through a G(i) mediated pathway. May be involved in oocyte maturation. Involved in neurosteroid inhibition of apoptosis. Also binds dehydroepiandrosterone (DHEA), pregnanolone, pregnenolone and allopregnanolone. The sequence is that of Membrane progestin receptor alpha (PAQR7) from Sus scrofa (Pig).